The primary structure comprises 891 residues: Valine--tRNA ligase (891 aa).

Positions 43–53 (PFTSGTLHLGH) match the 'HIGH' region motif. Residues 536–540 (KMSKS) carry the 'KMSKS' region motif. Position 539 (lysine 539) interacts with ATP.

This sequence belongs to the class-I aminoacyl-tRNA synthetase family. ValS type 2 subfamily.

It is found in the cytoplasm. It catalyses the reaction tRNA(Val) + L-valine + ATP = L-valyl-tRNA(Val) + AMP + diphosphate. Its function is as follows. Catalyzes the attachment of valine to tRNA(Val). As ValRS can inadvertently accommodate and process structurally similar amino acids such as threonine, to avoid such errors, it has a 'posttransfer' editing activity that hydrolyzes mischarged Thr-tRNA(Val) in a tRNA-dependent manner. The sequence is that of Valine--tRNA ligase from Pyrococcus horikoshii (strain ATCC 700860 / DSM 12428 / JCM 9974 / NBRC 100139 / OT-3).